Here is a 144-residue protein sequence, read N- to C-terminus: MLDIQQIKEIIPHRYPFLLVDKVLEVEEGKRAIGIKNVTANEEFFNGHFPDYPVMPGVLIVEALAQVGAVAMLKKEENRGRLAFFAGIDNCRFKRQVRPGDQLRLEVEMTRVRGAIGKGKAIATVDGEIACETEITFALGDKKE.

The active site involves His-48.

This sequence belongs to the thioester dehydratase family. FabZ subfamily.

The protein resides in the cytoplasm. It catalyses the reaction a (3R)-hydroxyacyl-[ACP] = a (2E)-enoyl-[ACP] + H2O. Functionally, involved in unsaturated fatty acids biosynthesis. Catalyzes the dehydration of short chain beta-hydroxyacyl-ACPs and long chain saturated and unsaturated beta-hydroxyacyl-ACPs. This Bacillus anthracis (strain A0248) protein is 3-hydroxyacyl-[acyl-carrier-protein] dehydratase FabZ.